Reading from the N-terminus, the 387-residue chain is Xylose isomerase (387 aa).

Residues H53 and D56 contribute to the active site. Residues E180, E216, H219, D244, D254, D256, and D286 each coordinate Mg(2+).

This sequence belongs to the xylose isomerase family. Homotetramer. Mg(2+) is required as a cofactor.

The protein resides in the cytoplasm. The enzyme catalyses alpha-D-xylose = alpha-D-xylulofuranose. The sequence is that of Xylose isomerase (xylA) from Thermus thermophilus (strain ATCC 27634 / DSM 579 / HB8).